A 132-amino-acid chain; its full sequence is MKYCFVFFVTLICLIANCSARPEGDKGLSAAPTDGKQIERASDKTSEENDGNTNAQGDSNSRLQDFFKQIKQFLDSLNPFKKLLGSGASVPQLPDLPTTPSLPDMPLKPEAILQNPSVPSLPNIPKPSLGLP.

Residues 1-20 form the signal peptide; it reads MKYCFVFFVTLICLIANCSA. 2 disordered regions span residues 23 to 62 and 87 to 132; these read EGDK…SNSR and GASV…LGLP. The segment covering 36–47 has biased composition (basic and acidic residues); the sequence is KQIERASDKTSE. Residues 51 to 62 show a composition bias toward polar residues; it reads GNTNAQGDSNSR. A compositionally biased stretch (low complexity) spans 91–105; it reads PQLPDLPTTPSLPDM.

The protein resides in the secreted. The polypeptide is Proline-rich protein sgp2 (sgp2) (Glossina morsitans morsitans (Savannah tsetse fly)).